The chain runs to 579 residues: ERV-BabFcenv provirus ancestral Env polyprotein (579 aa).

The N-terminal stretch at 1–22 (MISAVLNLPSTPLLPLLWFTLI) is a signal peptide. A surface protein region spans residues 23–387 (IPASLTNPKF…LSSSNNIQKQ (365 aa)). Residues 23 to 523 (IPASLTNPKF…VWLLPVVQQM (501 aa)) are Extracellular-facing. N-linked (GlcNAc...) asparagine glycosylation is found at Asn135, Asn203, Asn242, and Asn251. The CXXC signature appears at 255–258 (CFLC). Residues Asn276, Asn312, and Asn337 are each glycosylated (N-linked (GlcNAc...) asparagine). Residues 388–408 (AVFLPLIIGVSLASSLVASGL) form a fusion peptide region. The transmembrane protein stretch occupies residues 388–579 (AVFLPLIIGV…LPTSDPNYAP (192 aa)). The CKS-17 signature appears at 453 to 469 (AQNRRALDLLTAEKGGT). Cys470 and Cys477 are joined by a disulfide. Positions 470 to 478 (CLFLGEECC) match the CX6CC motif. Asn482 carries N-linked (GlcNAc...) asparagine glycosylation. A helical membrane pass occupies residues 524–544 (LPFLIPILILCLMLCLAPILI). Over 545–579 (KFLRARVQEITRVTFNQMLLHPYTQLPTSDPNYAP) the chain is Cytoplasmic.

It belongs to the gamma type-C retroviral envelope protein family. HERV class-I F(c)1 env subfamily. Specific enzymatic cleavages in vivo yield the mature SU and TM proteins. Post-translationally, the CXXC motif is highly conserved across a broad range of retroviral envelope proteins. It is thought to participate in the formation of a labile disulfide bond possibly with the CX6CC motif present in the transmembrane domain.

Its subcellular location is the cell membrane. In terms of biological role, retroviral envelope proteins mediate receptor recognition and membrane fusion during early infection. Endogenous envelope proteins may have kept, lost or modified their original function during evolution. In Papio anubis (Olive baboon), this protein is ERV-BabFcenv provirus ancestral Env polyprotein.